A 338-amino-acid chain; its full sequence is Methionine import ATP-binding protein MetN 2 (338 aa).

Residues 2–242 (IEIEKVCVDF…PQHAFTQQLV (241 aa)) form the ABC transporter domain. 39–46 (GTSGAGKS) is an ATP binding site.

This sequence belongs to the ABC transporter superfamily. Methionine importer (TC 3.A.1.24) family. In terms of assembly, the complex is composed of two ATP-binding proteins (MetN), two transmembrane proteins (MetI) and a solute-binding protein (MetQ).

It localises to the cell inner membrane. It catalyses the reaction L-methionine(out) + ATP + H2O = L-methionine(in) + ADP + phosphate + H(+). The enzyme catalyses D-methionine(out) + ATP + H2O = D-methionine(in) + ADP + phosphate + H(+). Functionally, part of the ABC transporter complex MetNIQ involved in methionine import. Responsible for energy coupling to the transport system. The sequence is that of Methionine import ATP-binding protein MetN 2 from Salmonella paratyphi A (strain ATCC 9150 / SARB42).